The following is a 561-amino-acid chain: Proline--tRNA ligase (561 aa).

The protein belongs to the class-II aminoacyl-tRNA synthetase family. ProS type 1 subfamily. In terms of assembly, homodimer.

The protein localises to the cytoplasm. The catalysed reaction is tRNA(Pro) + L-proline + ATP = L-prolyl-tRNA(Pro) + AMP + diphosphate. Catalyzes the attachment of proline to tRNA(Pro) in a two-step reaction: proline is first activated by ATP to form Pro-AMP and then transferred to the acceptor end of tRNA(Pro). As ProRS can inadvertently accommodate and process non-cognate amino acids such as alanine and cysteine, to avoid such errors it has two additional distinct editing activities against alanine. One activity is designated as 'pretransfer' editing and involves the tRNA(Pro)-independent hydrolysis of activated Ala-AMP. The other activity is designated 'posttransfer' editing and involves deacylation of mischarged Ala-tRNA(Pro). The misacylated Cys-tRNA(Pro) is not edited by ProRS. The protein is Proline--tRNA ligase of Wigglesworthia glossinidia brevipalpis.